The following is a 451-amino-acid chain: PTS system galactose-specific EIIC component (451 aa).

The region spanning 8-427 (LNKTLMPLAS…VLNVLIYYPF (420 aa)) is the PTS EIIC type-3 domain. The next 11 membrane-spanning stretches (helical) occupy residues 40–60 (LGIA…VDFL), 69–89 (FSAV…YNFA), 104–124 (GLLS…VPVV), 151–171 (TGST…LVYI), 190–210 (VVDS…MFGI), 239–259 (ANPW…FFGI), 263–283 (LIGG…IDAY), 296–316 (IVFA…GLVI), 332–352 (LGAI…LPMM), 356–376 (LFFI…LGLA), and 403–423 (ISGG…NVLI).

The protein resides in the cell membrane. Functionally, the phosphoenolpyruvate-dependent sugar phosphotransferase system (PTS), a major carbohydrate active transport system, catalyzes the phosphorylation of incoming sugar substrates concomitant with their translocation across the cell membrane. Involved in galactose transport with PtcA and PtcB. This is PTS system galactose-specific EIIC component from Lactococcus lactis subsp. cremoris (strain MG1363).